The chain runs to 457 residues: Probable xyloglucan 6-xylosyltransferase 3 (457 aa).

Positions 1–40 (MGKEDGFRTQKRVSTASSAAAGVLPTTMASGGVRRPPPRG) are disordered. The Cytoplasmic portion of the chain corresponds to 1 to 51 (MGKEDGFRTQKRVSTASSAAAGVLPTTMASGGVRRPPPRGRQIQKTFNNVK). A helical; Signal-anchor for type II membrane protein membrane pass occupies residues 52–71 (MTILCGFVTILVLRGTIGIN). The Lumenal portion of the chain corresponds to 72–457 (FGTSDADVVN…TTPLKIEARS (386 aa)). Asn115 and Asn431 each carry an N-linked (GlcNAc...) asparagine glycan.

It belongs to the glycosyltransferase 34 family.

Its subcellular location is the golgi apparatus membrane. It catalyses the reaction Transfers an alpha-D-xylosyl residue from UDP-D-xylose to a glucose residue in xyloglucan, forming an alpha-(1-&gt;6)-D-xylosyl-D-glucose linkage.. In terms of biological role, probable xyloglucan xylosyltransferase involved in the biosynthesis of xyloglucan. The chain is Probable xyloglucan 6-xylosyltransferase 3 from Arabidopsis thaliana (Mouse-ear cress).